Here is a 424-residue protein sequence, read N- to C-terminus: Trigger factor (424 aa).

The region spanning 163–248 is the PPIase FKBP-type domain; that stretch reads GDTVVLDFEG…IHEIKAKELP (86 aa).

The protein belongs to the FKBP-type PPIase family. Tig subfamily.

Its subcellular location is the cytoplasm. The enzyme catalyses [protein]-peptidylproline (omega=180) = [protein]-peptidylproline (omega=0). In terms of biological role, involved in protein export. Acts as a chaperone by maintaining the newly synthesized protein in an open conformation. Functions as a peptidyl-prolyl cis-trans isomerase. This Bacillus pumilus (strain SAFR-032) protein is Trigger factor.